A 203-amino-acid polypeptide reads, in one-letter code: V-type ATP synthase subunit D (203 aa).

This sequence belongs to the V-ATPase D subunit family.

In terms of biological role, produces ATP from ADP in the presence of a proton gradient across the membrane. The sequence is that of V-type ATP synthase subunit D (atpD) from Chlamydia muridarum (strain MoPn / Nigg).